The primary structure comprises 510 residues: Cytochrome P450 monooxygenase ptmK (510 aa).

Residues 2 to 22 form a helical membrane-spanning segment; sequence IIVTFFWVGIVLSAIWTFYKV. N313, N408, and N443 each carry an N-linked (GlcNAc...) asparagine glycan. C456 serves as a coordination point for heme.

The protein belongs to the cytochrome P450 family. It depends on heme as a cofactor.

The protein localises to the membrane. Its pathway is secondary metabolite biosynthesis. Functionally, cytochrome P450 monooxygenase; part of the gene cluster that mediates the biosynthesis of the indole diterpenes penitrems. The geranylgeranyl diphosphate (GGPP) synthase ptmG catalyzes the first step in penitrem biosynthesis via conversion of farnesyl pyrophosphate and isopentyl pyrophosphate into geranylgeranyl pyrophosphate (GGPP). Condensation of indole-3-glycerol phosphate with GGPP by the prenyl transferase ptmC then forms 3-geranylgeranylindole (3-GGI). Epoxidation by the FAD-dependent monooxygenase ptmM leads to a epoxidized-GGI that is substrate of the terpene cyclase ptmB for cyclization to yield paspaline. Paspaline is subsequently converted to 13-desoxypaxilline by the cytochrome P450 monooxygenase ptmP, the latter being then converted to paxilline by the cytochrome P450 monooxygenase ptmQ. Paxilline is converted to beta-paxitriol via C-10 ketoreduction by the short-chain dehydrogenase ptmH which can be monoprenylated at the C-20 by the indole diterpene prenyltransferase ptmD. A two-step elimination (acetylation and elimination) process performed by the O-acetyltransferase ptmV and ptmI leads to the production of the prenylated form of penijanthine. The FAD-linked oxidoreductase ptmO then converts the prenylated form of penijanthine into PC-M5 which is in turn transformed into PC-M4 by the aromatic dimethylallyltransferase ptmE. Five sequential oxidative transformations performed by the cytochrome P450 monooxygenases ptmK, ptmU, ptmL, ptmN and ptmJ yield the various penitrem compounds. PtmK, ptmU and ptmM are involved in the formation of the key bicyclic ring of penitrem C via the formation of the intermediates secopenitrem D and penitrem D. PtmL catalyzes the epoxidation of penitrem D and C to yield penitrem B and F, respectively. PtmJ catalyzes the last benzylic hydroxylation to convert penitrem B to prenitrem E and penitrem F to penitrem A. This is Cytochrome P450 monooxygenase ptmK from Penicillium ochrochloron.